A 329-amino-acid chain; its full sequence is Red chlorophyll catabolite reductase 1, chloroplastic (329 aa).

A compositionally biased stretch (pro residues) spans 1 to 11; it reads MLQLRSPPPAT. The N-terminal 50 residues, 1–50, are a transit peptide targeting the chloroplast; that stretch reads MLQLRSPPPATSSPSSAVSFPTLAPRLLPLRRRRRGAGSQLGGKTSSAVR. The segment at 1-61 is disordered; it reads MLQLRSPPPA…SSAAAPGATE (61 aa). Composition is skewed to low complexity over residues 12–28 and 46–59; these read SSPS…PRLL and SSAV…APGA. Residues glutamate 163, 216–218, and aspartate 299 each bind red chlorophyll catabolite; that span reads YRS.

Expressed in leaves. Expressed at low levels in roots, stems, panicles and seeds.

Its subcellular location is the plastid. It is found in the chloroplast. It carries out the reaction primary fluorescent chlorophyll catabolite + 2 oxidized [2Fe-2S]-[ferredoxin] = red chlorophyll catabolite + 2 reduced [2Fe-2S]-[ferredoxin] + 3 H(+). It functions in the pathway porphyrin-containing compound metabolism; chlorophyll degradation. In terms of biological role, catalyzes the key reaction of chlorophyll catabolism, porphyrin macrocycle cleavage of pheophorbide a (pheide a) to a primary fluorescent catabolite (pFCC). Works in a two-step reaction with pheophorbide a oxygenase (PaO) by reducing the C20/C1 double bond of the intermediate, RCC. Belongs to the chlorophyll catabolic enzymes (CCEs). May play a role in senescence and response to wounding. The sequence is that of Red chlorophyll catabolite reductase 1, chloroplastic from Oryza sativa subsp. japonica (Rice).